An 80-amino-acid polypeptide reads, in one-letter code: CLAVATA3/ESR (CLE)-related protein 4 (80 aa).

An N-terminal signal peptide occupies residues 1-22; it reads MASFKLWVCLILLLLEFSVHQC. The segment at 55–80 is disordered; sequence SKDGQTVLGTLDSKRLSPGGPDPRHH. Residues P72 and P75 each carry the hydroxyproline modification. P75 carries O-linked (Ara...) hydroxyproline glycosylation.

The protein belongs to the CLV3/ESR signal peptide family. In terms of processing, the O-glycosylation (arabinosylation) of the hydroxyproline Pro-75 enhances binding affinity of the CLE4p peptide for its receptor. As to expression, expressed in roots and seedlings.

It localises to the secreted. The protein localises to the extracellular space. Functionally, extracellular signal peptide that regulates cell fate. In Arabidopsis thaliana (Mouse-ear cress), this protein is CLAVATA3/ESR (CLE)-related protein 4.